We begin with the raw amino-acid sequence, 763 residues long: Ribonucleoside-diphosphate reductase subunit alpha (763 aa).

The region spanning 5–95 is the ATP-cone domain; it reads LFVTKRNGKK…IFHLRKKAYG (91 aa). Residues K9, 15–21, T55, and K91 each bind ATP; that span reads EKINLDK. T209 is a GDP binding site. The cysteines at positions 225 and 462 are disulfide-linked. DTTP is bound by residues 232 to 234, R262, and R269; that span reads DNL. N437 serves as a coordination point for GDP. N437 serves as the catalytic Proton acceptor. C439 functions as the Cysteine radical intermediate in the catalytic mechanism. GDP-binding positions include E441 and 623-625; that span reads ETS. The Proton acceptor role is filled by E441.

The protein belongs to the ribonucleoside diphosphate reductase large chain family. In terms of assembly, tetramer of two alpha and two beta subunits.

The catalysed reaction is a 2'-deoxyribonucleoside 5'-diphosphate + [thioredoxin]-disulfide + H2O = a ribonucleoside 5'-diphosphate + [thioredoxin]-dithiol. Under complex allosteric control mediated by deoxynucleoside triphosphates and ATP binding to separate specificity and activation sites on the alpha subunit. The type of nucleotide bound at the specificity site determines substrate preference. It seems probable that ATP makes the enzyme reduce CDP and UDP, dGTP favors ADP reduction and dTTP favors GDP reduction. Stimulated by ATP and inhibited by dATP binding to the activity site. In terms of biological role, provides the precursors necessary for DNA synthesis. Catalyzes the biosynthesis of deoxyribonucleotides from the corresponding ribonucleotides. The chain is Ribonucleoside-diphosphate reductase subunit alpha (nrdA) from Buchnera aphidicola subsp. Schizaphis graminum (strain Sg).